Consider the following 830-residue polypeptide: Leucine--tRNA ligase (830 aa).

The short motif at 34–44 is the 'HIGH' region element; that stretch reads PYPSGNIHMGH. The 'KMSKS' region motif lies at 592-596; it reads KMSKS. Lys-595 contacts ATP.

It belongs to the class-I aminoacyl-tRNA synthetase family.

Its subcellular location is the cytoplasm. The enzyme catalyses tRNA(Leu) + L-leucine + ATP = L-leucyl-tRNA(Leu) + AMP + diphosphate. This Ehrlichia ruminantium (strain Welgevonden) protein is Leucine--tRNA ligase.